A 295-amino-acid chain; its full sequence is MEIRRRPPNPTVRVENLEYAVPHREAKAKNILEEIVWYKDIEIKNFKKIVSLEDLIKKLDKLPPTKDFGKSILQSKIKPGVIAEIKKASPSKGVIREDFRPNEIAFSYERSGASCISVLTDKRFFQGSYEILQDVRGATNLPLLCKDFIISAYQIYKARVSGADAILLIAAILSDDDLFYLKKIADNLGMSVLVEVHDEQELKRILSFKLFDLIGINNRDLKTFKTDLKTSIEMMSKYSDIFSKHNIIPISESGINNSEELKKLVSIGIKGVLIGERFMRECDIEHSFKKLFKSI.

This sequence belongs to the TrpC family.

It catalyses the reaction 1-(2-carboxyphenylamino)-1-deoxy-D-ribulose 5-phosphate + H(+) = (1S,2R)-1-C-(indol-3-yl)glycerol 3-phosphate + CO2 + H2O. It functions in the pathway amino-acid biosynthesis; L-tryptophan biosynthesis; L-tryptophan from chorismate: step 4/5. This chain is Indole-3-glycerol phosphate synthase, found in Prochlorococcus marinus (strain MIT 9515).